A 334-amino-acid chain; its full sequence is Type IV inositol polyphosphate 5-phosphatase 11 (334 aa).

2 catalytic regions span residues 206 to 222 and 282 to 297; these read DLTV…QDVS and KIRV…FKIQ.

Belongs to the inositol polyphosphate 5-phosphatase family. In terms of tissue distribution, expressed ubiquitously.

The protein resides in the cell membrane. It catalyses the reaction a 1,2-diacyl-sn-glycero-3-phospho-(1D-myo-inositol-4,5-bisphosphate) + H2O = a 1,2-diacyl-sn-glycero-3-phospho-(1D-myo-inositol 4-phosphate) + phosphate. It carries out the reaction a 1,2-diacyl-sn-glycero-3-phospho-(1D-myo-inositol-3,4,5-trisphosphate) + H2O = a 1,2-diacyl-sn-glycero-3-phospho-(1D-myo-inositol-3,4-bisphosphate) + phosphate. Its function is as follows. Has phosphatase activity toward PtdIns(4,5)P2, and in vitro toward PtdIns(3,5)P2 and PtdIns(3,4,5)P3. Cannot dephosphorylate PtdIns(5)P, Ins(1,4,5)P3 and Ins(1,3,4,5)P4. The sequence is that of Type IV inositol polyphosphate 5-phosphatase 11 from Arabidopsis thaliana (Mouse-ear cress).